The chain runs to 324 residues: NADH-ubiquinone oxidoreductase chain 1 (324 aa).

The next 9 helical transmembrane spans lie at 9–29 (ILNPLAFIVPVLLAVAFLTLL), 43–63 (PNIVGPYGLLQPIADGVKLFI), 75–95 (ILFILTPMLALTLAMTLWAPL), 106–126 (LAILLFVALSSLAVYSILGSG), 146–166 (ISYEVSLGLILLSLIIFTGGF), 177–197 (SIWLIIPAWPLAAMWYISTLA), 228–250 (LFFLAEYANILFMNTLSASLFLG), 259–279 (ELTTMNLMTKAAVLSLVFLWV), and 299–319 (FLPLTLALVIWHLALPITFAG).

This sequence belongs to the complex I subunit 1 family.

The protein localises to the mitochondrion inner membrane. It carries out the reaction a ubiquinone + NADH + 5 H(+)(in) = a ubiquinol + NAD(+) + 4 H(+)(out). Core subunit of the mitochondrial membrane respiratory chain NADH dehydrogenase (Complex I) that is believed to belong to the minimal assembly required for catalysis. Complex I functions in the transfer of electrons from NADH to the respiratory chain. The immediate electron acceptor for the enzyme is believed to be ubiquinone. This chain is NADH-ubiquinone oxidoreductase chain 1 (MT-ND1), found in Tetraodon nigroviridis (Spotted green pufferfish).